An 88-amino-acid chain; its full sequence is Small ribosomal subunit protein bS16c (88 aa).

Component of the chloroplast small ribosomal subunit (SSU). Mature 70S chloroplast ribosomes of higher plants consist of a small (30S) and a large (50S) subunit. The 30S small subunit contains 1 molecule of ribosomal RNA (16S rRNA) and 24 different proteins. The 50S large subunit contains 3 rRNA molecules (23S, 5S and 4.5S rRNA) and 33 different proteins.

Its subcellular location is the plastid. The protein resides in the chloroplast. Component of the chloroplast ribosome (chloro-ribosome), a dedicated translation machinery responsible for the synthesis of chloroplast genome-encoded proteins, including proteins of the transcription and translation machinery and components of the photosynthetic apparatus. The protein is Small ribosomal subunit protein bS16c of Spinacia oleracea (Spinach).